The sequence spans 294 residues: Flavin-dependent thymidylate synthase (294 aa).

The 224-residue stretch at 27–250 folds into the ThyX domain; that stretch reads GFIRVIDYMG…PFTYEAFEEY (224 aa). FAD-binding positions include threonine 73, 96–98, and glutamate 104; that span reads RHR. Residues 93–96, 104–108, and arginine 189 contribute to the dUMP site; these read QWIR and EYSAR. Residues 96–106 carry the ThyX motif motif; the sequence is RHRTASVNEYS. Residues 205 to 207 and histidine 211 contribute to the FAD site; that span reads NLH. Arginine 216 is a dUMP binding site. Residue arginine 216 is the Involved in ionization of N3 of dUMP, leading to its activation of the active site.

It belongs to the thymidylate synthase ThyX family. In terms of assembly, homotetramer. FAD is required as a cofactor.

It carries out the reaction dUMP + (6R)-5,10-methylene-5,6,7,8-tetrahydrofolate + NADPH + H(+) = dTMP + (6S)-5,6,7,8-tetrahydrofolate + NADP(+). Its pathway is pyrimidine metabolism; dTTP biosynthesis. Catalyzes the reductive methylation of 2'-deoxyuridine-5'-monophosphate (dUMP) to 2'-deoxythymidine-5'-monophosphate (dTMP) while utilizing 5,10-methylenetetrahydrofolate (mTHF) as the methyl donor, and NADPH and FADH(2) as the reductant. This Rickettsia prowazekii (strain Madrid E) protein is Flavin-dependent thymidylate synthase.